A 296-amino-acid polypeptide reads, in one-letter code: 4-hydroxy-tetrahydrodipicolinate synthase (296 aa).

A pyruvate-binding site is contributed by threonine 50. Residue tyrosine 138 is the Proton donor/acceptor of the active site. Catalysis depends on lysine 166, which acts as the Schiff-base intermediate with substrate. Residue isoleucine 208 participates in pyruvate binding.

This sequence belongs to the DapA family. In terms of assembly, homotetramer; dimer of dimers.

It localises to the cytoplasm. The enzyme catalyses L-aspartate 4-semialdehyde + pyruvate = (2S,4S)-4-hydroxy-2,3,4,5-tetrahydrodipicolinate + H2O + H(+). It participates in amino-acid biosynthesis; L-lysine biosynthesis via DAP pathway; (S)-tetrahydrodipicolinate from L-aspartate: step 3/4. In terms of biological role, catalyzes the condensation of (S)-aspartate-beta-semialdehyde [(S)-ASA] and pyruvate to 4-hydroxy-tetrahydrodipicolinate (HTPA). The polypeptide is 4-hydroxy-tetrahydrodipicolinate synthase (Ruthia magnifica subsp. Calyptogena magnifica).